Here is a 290-residue protein sequence, read N- to C-terminus: 33 kDa chaperonin (290 aa).

Intrachain disulfides connect Cys-235–Cys-237 and Cys-268–Cys-271.

This sequence belongs to the HSP33 family. Post-translationally, under oxidizing conditions two disulfide bonds are formed involving the reactive cysteines. Under reducing conditions zinc is bound to the reactive cysteines and the protein is inactive.

The protein resides in the cytoplasm. In terms of biological role, redox regulated molecular chaperone. Protects both thermally unfolding and oxidatively damaged proteins from irreversible aggregation. Plays an important role in the bacterial defense system toward oxidative stress. This is 33 kDa chaperonin from Streptococcus pyogenes serotype M12 (strain MGAS2096).